The primary structure comprises 376 residues: Probable allantoicase (376 aa).

It belongs to the allantoicase family.

The catalysed reaction is allantoate + H2O = (S)-ureidoglycolate + urea. The protein operates within nitrogen metabolism; (S)-allantoin degradation; (S)-ureidoglycolate from allantoate (aminidohydrolase route): step 1/1. This is Probable allantoicase from Streptomyces avermitilis (strain ATCC 31267 / DSM 46492 / JCM 5070 / NBRC 14893 / NCIMB 12804 / NRRL 8165 / MA-4680).